The following is a 477-amino-acid chain: Ubiquinone biosynthesis monooxygenase COQ6, mitochondrial (477 aa).

The transit peptide at 1–25 directs the protein to the mitochondrion; sequence MLGVLRIQGALASAGQARLLSVRLL.

This sequence belongs to the UbiH/COQ6 family. Component of a multi-subunit COQ enzyme complex. The cofactor is FAD.

It localises to the mitochondrion inner membrane. The catalysed reaction is a 4-hydroxy-3-(all-trans-polyprenyl)benzoate + 2 reduced [2Fe-2S]-[ferredoxin] + O2 + 2 H(+) = a 3,4-dihydroxy-5-(all-trans-polyprenyl)benzoate + 2 oxidized [2Fe-2S]-[ferredoxin] + H2O. It carries out the reaction a 2-methoxy-6-(all-trans-polyprenyl)phenol + 2 reduced [2Fe-2S]-[ferredoxin] + O2 + 2 H(+) = a 2-methoxy-6-(all-trans-polyprenyl)benzene-1,4-diol + 2 oxidized [2Fe-2S]-[ferredoxin] + H2O. Its pathway is cofactor biosynthesis; ubiquinone biosynthesis. Its function is as follows. FAD-dependent monooxygenase required for two non-consecutive steps during ubiquinone biosynthesis. Required for the C5-ring hydroxylation during ubiquinone biosynthesis by catalyzing the hydroxylation of 4-hydroxy-3-(all-trans-polyprenyl)benzoic acid to 3,4-dihydroxy-5-(all-trans-polyprenyl)benzoic acid. Also acts downstream of coq4, for the C1-hydroxylation during ubiquinone biosynthesis by catalyzing the hydroxylation of 2-methoxy-6-(all-trans-polyprenyl)phenol to 2-methoxy-6-(all-trans-polyprenyl)benzene-1,4-diol. The electrons required for the hydroxylation reaction are funneled indirectly to Coq6 from NADPH via a ferredoxin/ferredoxin reductase system. The sequence is that of Ubiquinone biosynthesis monooxygenase COQ6, mitochondrial from Drosophila melanogaster (Fruit fly).